A 355-amino-acid chain; its full sequence is D-alanine--D-alanine ligase (355 aa).

Residues 143 to 350 enclose the ATP-grasp domain; it reads KTIFSNLKIP…IEQLVAKLVD (208 aa). Residue 178 to 233 participates in ATP binding; it reads IKKLNFPVFVKPSNSGSSLGISKVINKSALLKALEKAWEIDARILVEEGLETREIE. Mg(2+) is bound by residues aspartate 303, glutamate 317, and asparagine 319.

The protein belongs to the D-alanine--D-alanine ligase family. Requires Mg(2+) as cofactor. Mn(2+) is required as a cofactor.

It localises to the cytoplasm. It catalyses the reaction 2 D-alanine + ATP = D-alanyl-D-alanine + ADP + phosphate + H(+). The protein operates within cell wall biogenesis; peptidoglycan biosynthesis. Its function is as follows. Cell wall formation. The polypeptide is D-alanine--D-alanine ligase (Prochlorococcus marinus (strain MIT 9312)).